Consider the following 1000-residue polypeptide: SEC23-interacting protein (1000 aa).

The tract at residues 1–367 is interaction with SEC23A; it reads MAERKPNGGS…YTEEFSEKLE (367 aa). The tract at residues 133–252 is disordered; it reads FSPSISKAQP…QQVPARPGAP (120 aa). The span at 154–167 shows a compositional bias: low complexity; it reads SYLPSQPSSLPPSY. The span at 207–218 shows a compositional bias: pro residues; that stretch reads PGPPAHPPPSGP. Over residues 235–246 the composition is skewed to low complexity; it reads SSVQSPAQQQVP. One can recognise an SAM domain in the interval 644 to 707; sequence KEVLTLQETL…NFVEHKAAKL (64 aa). The interval 716 to 748 is disordered; that stretch reads AVAATSTKGQEQSAQKTKDMASLPSESNEPKRK. Residues serine 737 and serine 926 each carry the phosphoserine modification. The region spanning 779 to 989 is the DDHD domain; the sequence is LDFEPEIFFA…ALLLLKEIYR (211 aa).

It belongs to the PA-PLA1 family. In terms of assembly, interacts with SEC23A. In terms of tissue distribution, ubiquitously expressed with stronger levels detected in heart, liver and skeletal muscle.

The protein localises to the cytoplasmic vesicle. It is found in the COPII-coated vesicle membrane. The protein resides in the endoplasmic reticulum. Plays a role in the organization of endoplasmic reticulum exit sites. Specifically binds to phosphatidylinositol 3-phosphate (PI(3)P), phosphatidylinositol 4-phosphate (PI(4)P) and phosphatidylinositol 5-phosphate (PI(5)P). The protein is SEC23-interacting protein (SEC23IP) of Homo sapiens (Human).